A 406-amino-acid chain; its full sequence is Tryptophan synthase beta chain (406 aa).

Lys99 bears the N6-(pyridoxal phosphate)lysine mark.

This sequence belongs to the TrpB family. As to quaternary structure, tetramer of two alpha and two beta chains. Pyridoxal 5'-phosphate is required as a cofactor.

The catalysed reaction is (1S,2R)-1-C-(indol-3-yl)glycerol 3-phosphate + L-serine = D-glyceraldehyde 3-phosphate + L-tryptophan + H2O. The protein operates within amino-acid biosynthesis; L-tryptophan biosynthesis; L-tryptophan from chorismate: step 5/5. The beta subunit is responsible for the synthesis of L-tryptophan from indole and L-serine. In Brucella anthropi (strain ATCC 49188 / DSM 6882 / CCUG 24695 / JCM 21032 / LMG 3331 / NBRC 15819 / NCTC 12168 / Alc 37) (Ochrobactrum anthropi), this protein is Tryptophan synthase beta chain.